The following is a 464-amino-acid chain: Signal recognition particle 54 kDa protein (464 aa).

GTP-binding positions include 104–111 (GLQGSGKT), 184–188 (DTAGR), and 242–245 (TKLD).

The protein belongs to the GTP-binding SRP family. SRP54 subfamily. Part of the signal recognition particle protein translocation system, which is composed of SRP and FtsY. Archaeal SRP consists of a 7S RNA molecule of 300 nucleotides and two protein subunits: SRP54 and SRP19.

The protein resides in the cytoplasm. It catalyses the reaction GTP + H2O = GDP + phosphate + H(+). Involved in targeting and insertion of nascent membrane proteins into the cytoplasmic membrane. Binds to the hydrophobic signal sequence of the ribosome-nascent chain (RNC) as it emerges from the ribosomes. The SRP-RNC complex is then targeted to the cytoplasmic membrane where it interacts with the SRP receptor FtsY. This is Signal recognition particle 54 kDa protein from Halorubrum lacusprofundi (strain ATCC 49239 / DSM 5036 / JCM 8891 / ACAM 34).